We begin with the raw amino-acid sequence, 220 residues long: Metalloproteinase inhibitor 2 (220 aa).

Positions 1–26 (MGAAARSLPLAFCLLLLGTLLPRADA) are cleaved as a signal peptide. Cysteine 27 is a binding site for Zn(2+). Residues 27 to 30 (CSCS) are involved in metalloproteinase-binding. Disulfide bonds link cysteine 27–cysteine 98, cysteine 29–cysteine 127, cysteine 39–cysteine 152, cysteine 154–cysteine 201, cysteine 159–cysteine 164, and cysteine 172–cysteine 193. Residues 27-152 (CSCSPVHPQQ…SLNHRYQMGC (126 aa)) enclose the NTR domain.

It belongs to the protease inhibitor I35 (TIMP) family. Interacts (via the C-terminal) with MMP2 (via the C-terminal PEX domain); the interaction inhibits the MMP2 activity. The activity of TIMP2 is dependent on the presence of disulfide bonds.

The protein resides in the secreted. In terms of biological role, complexes with metalloproteinases (such as collagenases) and irreversibly inactivates them by binding to their catalytic zinc cofactor. In Bos taurus (Bovine), this protein is Metalloproteinase inhibitor 2 (TIMP2).